The primary structure comprises 271 residues: Acetyl-coenzyme A carboxylase carboxyl transferase subunit alpha (271 aa).

A CoA carboxyltransferase C-terminal domain is found at 1–247 (MSRELIRTVD…KKTILEALGE (247 aa)).

Belongs to the AccA family. In terms of assembly, acetyl-CoA carboxylase is a heterohexamer composed of biotin carboxyl carrier protein (AccB), biotin carboxylase (AccC) and two subunits each of ACCase subunit alpha (AccA) and ACCase subunit beta (AccD).

It localises to the cytoplasm. It catalyses the reaction N(6)-carboxybiotinyl-L-lysyl-[protein] + acetyl-CoA = N(6)-biotinyl-L-lysyl-[protein] + malonyl-CoA. The protein operates within lipid metabolism; malonyl-CoA biosynthesis; malonyl-CoA from acetyl-CoA: step 1/1. In terms of biological role, component of the acetyl coenzyme A carboxylase (ACC) complex. First, biotin carboxylase catalyzes the carboxylation of biotin on its carrier protein (BCCP) and then the CO(2) group is transferred by the carboxyltransferase to acetyl-CoA to form malonyl-CoA. This is Acetyl-coenzyme A carboxylase carboxyl transferase subunit alpha from Clostridium perfringens (strain SM101 / Type A).